Reading from the N-terminus, the 245-residue chain is tRNA1(Val) (adenine(37)-N6)-methyltransferase (245 aa).

This sequence belongs to the methyltransferase superfamily. tRNA (adenine-N(6)-)-methyltransferase family.

It localises to the cytoplasm. The enzyme catalyses adenosine(37) in tRNA1(Val) + S-adenosyl-L-methionine = N(6)-methyladenosine(37) in tRNA1(Val) + S-adenosyl-L-homocysteine + H(+). In terms of biological role, specifically methylates the adenine in position 37 of tRNA(1)(Val) (anticodon cmo5UAC). The sequence is that of tRNA1(Val) (adenine(37)-N6)-methyltransferase from Escherichia coli (strain SE11).